A 324-amino-acid polypeptide reads, in one-letter code: DNA repair and recombination protein RadA (324 aa).

114 to 121 provides a ligand contact to ATP; it reads GEFGSGKT.

This sequence belongs to the eukaryotic RecA-like protein family.

In terms of biological role, involved in DNA repair and in homologous recombination. Binds and assemble on single-stranded DNA to form a nucleoprotein filament. Hydrolyzes ATP in a ssDNA-dependent manner and promotes DNA strand exchange between homologous DNA molecules. This chain is DNA repair and recombination protein RadA, found in Metallosphaera sedula (strain ATCC 51363 / DSM 5348 / JCM 9185 / NBRC 15509 / TH2).